We begin with the raw amino-acid sequence, 174 residues long: Large ribosomal subunit protein uL18 (174 aa).

Belongs to the universal ribosomal protein uL18 family. In terms of assembly, part of the 50S ribosomal subunit. Contacts the 5S and 23S rRNAs.

Its function is as follows. This is one of the proteins that bind and probably mediate the attachment of the 5S RNA into the large ribosomal subunit, where it forms part of the central protuberance. This is Large ribosomal subunit protein uL18 from Methanoregula boonei (strain DSM 21154 / JCM 14090 / 6A8).